Reading from the N-terminus, the 429-residue chain is Enolase (429 aa).

Q169 lines the (2R)-2-phosphoglycerate pocket. The active-site Proton donor is E211. Residues D248, E289, and D316 each contribute to the Mg(2+) site. 4 residues coordinate (2R)-2-phosphoglycerate: K341, R370, S371, and K392. Catalysis depends on K341, which acts as the Proton acceptor.

The protein belongs to the enolase family. The cofactor is Mg(2+).

It localises to the cytoplasm. The protein resides in the secreted. Its subcellular location is the cell surface. It carries out the reaction (2R)-2-phosphoglycerate = phosphoenolpyruvate + H2O. It functions in the pathway carbohydrate degradation; glycolysis; pyruvate from D-glyceraldehyde 3-phosphate: step 4/5. Catalyzes the reversible conversion of 2-phosphoglycerate (2-PG) into phosphoenolpyruvate (PEP). It is essential for the degradation of carbohydrates via glycolysis. This is Enolase from Anaplasma phagocytophilum (strain HZ).